A 406-amino-acid polypeptide reads, in one-letter code: Prisilkin-39 (406 aa).

The first 19 residues, 1–19 (MKGFLTLLLVCAILSTGYC), serve as a signal peptide directing secretion. 2 helical membrane-spanning segments follow: residues 26 to 48 (ALTG…GAGA) and 58 to 80 (VGVG…YGGY). Residues 78-197 (GGYSGYGYGY…YSGYSYGYPT (120 aa)) form a 10 X 12 AA tandem repeat of G-G-Y-[SG]-G-Y-[GS]-Y-G-Y-P-[AT] region.

Expression is confined to the prism and organic layers of the shell with no expression detected in the nacreous shell layer. Also expressed in the mantle edge, extrapallial fluid, hemolymph and, to a lesser extent, in the viscus (at protein level). In the mantle, localizes to inner epithelial cells of the outer fold and the outer epithelial cells of the middle fold at the bottom of the periostracal groove.

The protein resides in the membrane. Functionally, binds chitin and may serve as a framework constituent participating in shell formation. Inhibits aragonite precipitation and may regulate aragonite growth during shell layer formation. Does not affect calcite crystallization. The protein is Prisilkin-39 of Pinctada fucata (Akoya pearl oyster).